The chain runs to 156 residues: CASP-like protein 5C1 (156 aa).

The Cytoplasmic portion of the chain corresponds to 1 to 24 (MENRERAGAGAVGSAGSLGLRVEQ). Residues 25–45 (AVFSSASLLFMSVGVEFFSYT) form a helical membrane-spanning segment. Position 46 (Ala-46) is a topological domain, extracellular. Residues 47 to 67 (FCFLVTIMGLVIPWSCTLAMI) traverse the membrane as a helical segment. Residues 68-81 (DVYSILVGCPLRVP) are Cytoplasmic-facing. Residues 82 to 102 (GVMVIVVIGDWVLAILSLAAA) form a helical membrane-spanning segment. Topologically, residues 103 to 132 (SSSAAVIDLLLQFHGSHCSPRFCGRYQLSA) are extracellular. Residues 133 to 153 (MMAFLSWFLTAASSLFNLWFI) form a helical membrane-spanning segment. Residues 154-156 (ASR) lie on the Cytoplasmic side of the membrane.

The protein belongs to the Casparian strip membrane proteins (CASP) family. As to quaternary structure, homodimer and heterodimers.

It localises to the cell membrane. The chain is CASP-like protein 5C1 from Oryza sativa subsp. indica (Rice).